Consider the following 265-residue polypeptide: Putative N(omega)-hydroxy-L-arginine synthase DcsA (265 aa).

This sequence belongs to the DcsA family. Heme is required as a cofactor.

Involved in the biosynthesis of the antibiotic D-cycloserine (DCS), a cyclic structural analog of D-alanine, used as an antitubercular agent. Could catalyze the production of N(omega)-hydroxy-L-arginine (NHA) from L-arginine. The sequence is that of Putative N(omega)-hydroxy-L-arginine synthase DcsA from Streptomyces lavendulae.